Here is a 152-residue protein sequence, read N- to C-terminus: Protein-export protein SecB (152 aa).

The protein belongs to the SecB family. As to quaternary structure, homotetramer, a dimer of dimers. One homotetramer interacts with 1 SecA dimer.

The protein resides in the cytoplasm. In terms of biological role, one of the proteins required for the normal export of preproteins out of the cell cytoplasm. It is a molecular chaperone that binds to a subset of precursor proteins, maintaining them in a translocation-competent state. It also specifically binds to its receptor SecA. This is Protein-export protein SecB from Verminephrobacter eiseniae (strain EF01-2).